A 185-amino-acid polypeptide reads, in one-letter code: Ribosome-recycling factor (185 aa).

This sequence belongs to the RRF family.

It localises to the cytoplasm. In terms of biological role, responsible for the release of ribosomes from messenger RNA at the termination of protein biosynthesis. May increase the efficiency of translation by recycling ribosomes from one round of translation to another. This is Ribosome-recycling factor from Azoarcus sp. (strain BH72).